The primary structure comprises 391 residues: Processive diacylglycerol beta-glucosyltransferase (391 aa).

The protein belongs to the glycosyltransferase 28 family. UgtP subfamily.

It is found in the cell membrane. The catalysed reaction is a 1,2-diacyl-3-O-(beta-D-glucopyranosyl)-sn-glycerol + UDP-alpha-D-glucose = a 1,2-diacyl-3-O-(beta-D-Glc-(1-&gt;6)-beta-D-Glc)-sn-glycerol + UDP + H(+). It catalyses the reaction a 1,2-diacyl-sn-glycerol + UDP-alpha-D-glucose = a 1,2-diacyl-3-O-(beta-D-glucopyranosyl)-sn-glycerol + UDP + H(+). Its pathway is glycolipid metabolism; diglucosyl-diacylglycerol biosynthesis. Its function is as follows. Processive glucosyltransferase involved in the biosynthesis of both the bilayer- and non-bilayer-forming membrane glucolipids. Is able to successively transfer two glucosyl residues to diacylglycerol (DAG), thereby catalyzing the formation of beta-monoglucosyl-DAG (3-O-(beta-D-glucopyranosyl)-1,2-diacyl-sn-glycerol) and beta-diglucosyl-DAG (3-O-(beta-D-glucopyranosyl-beta-(1-&gt;6)-D-glucopyranosyl)-1,2-diacyl-sn-glycerol). Beta-diglucosyl-DAG is the predominant glycolipid found in Bacillales and is also used as a membrane anchor for lipoteichoic acid (LTA). The protein is Processive diacylglycerol beta-glucosyltransferase of Staphylococcus epidermidis (strain ATCC 35984 / DSM 28319 / BCRC 17069 / CCUG 31568 / BM 3577 / RP62A).